Consider the following 132-residue polypeptide: Putative RNase AF_2433 (132 aa).

Catalysis depends on residues R90 and H95. Positions 90-97 (RNWLVHRY) match the RX(4)HXY motif motif. O-di-AMP-tyrosine is present on Y97.

It belongs to the HepT RNase toxin family. As to quaternary structure, homodimer, probably forms a complex with cognate antitoxin AF_2432. Modified by cognate antitoxin AF_2432; probably at least 2 successive AMPylation events occur on Tyr-97.

Its function is as follows. Probable toxic component of a putative type VII toxin-antitoxin (TA) system, probably an RNase. Probably neutralized by cognate antitoxin AF_2432. Neutralization may be due to AMPylation by AF_2432. The protein is Putative RNase AF_2433 of Archaeoglobus fulgidus (strain ATCC 49558 / DSM 4304 / JCM 9628 / NBRC 100126 / VC-16).